A 478-amino-acid polypeptide reads, in one-letter code: 3-isopropylmalate dehydratase large subunit (478 aa).

3 residues coordinate [4Fe-4S] cluster: cysteine 357, cysteine 418, and cysteine 421.

Belongs to the aconitase/IPM isomerase family. LeuC type 1 subfamily. In terms of assembly, heterodimer of LeuC and LeuD. Requires [4Fe-4S] cluster as cofactor.

It carries out the reaction (2R,3S)-3-isopropylmalate = (2S)-2-isopropylmalate. It functions in the pathway amino-acid biosynthesis; L-leucine biosynthesis; L-leucine from 3-methyl-2-oxobutanoate: step 2/4. Functionally, catalyzes the isomerization between 2-isopropylmalate and 3-isopropylmalate, via the formation of 2-isopropylmaleate. The protein is 3-isopropylmalate dehydratase large subunit of Novosphingobium aromaticivorans (strain ATCC 700278 / DSM 12444 / CCUG 56034 / CIP 105152 / NBRC 16084 / F199).